The chain runs to 82 residues: Large ribosomal subunit protein uL23 (82 aa).

The protein belongs to the universal ribosomal protein uL23 family. As to quaternary structure, part of the 50S ribosomal subunit. Contacts protein L29.

Functionally, binds to 23S rRNA. One of the proteins that surrounds the polypeptide exit tunnel on the outside of the ribosome. The protein is Large ribosomal subunit protein uL23 of Sulfurisphaera tokodaii (strain DSM 16993 / JCM 10545 / NBRC 100140 / 7) (Sulfolobus tokodaii).